The chain runs to 207 residues: Pyridoxine/pyridoxamine 5'-phosphate oxidase (207 aa).

FMN-binding positions include 53–58 (RMVLLK), 68–69 (YT), Lys75, and Gln97. Position 58 (Lys58) interacts with substrate. 3 residues coordinate substrate: Tyr115, Arg119, and Ser123. FMN-binding positions include 132–133 (QS) and Trp177. 183-185 (RLH) provides a ligand contact to substrate. Residue Arg187 participates in FMN binding.

This sequence belongs to the pyridoxamine 5'-phosphate oxidase family. Homodimer. The cofactor is FMN.

It catalyses the reaction pyridoxamine 5'-phosphate + O2 + H2O = pyridoxal 5'-phosphate + H2O2 + NH4(+). The catalysed reaction is pyridoxine 5'-phosphate + O2 = pyridoxal 5'-phosphate + H2O2. It participates in cofactor metabolism; pyridoxal 5'-phosphate salvage; pyridoxal 5'-phosphate from pyridoxamine 5'-phosphate: step 1/1. It functions in the pathway cofactor metabolism; pyridoxal 5'-phosphate salvage; pyridoxal 5'-phosphate from pyridoxine 5'-phosphate: step 1/1. In terms of biological role, catalyzes the oxidation of either pyridoxine 5'-phosphate (PNP) or pyridoxamine 5'-phosphate (PMP) into pyridoxal 5'-phosphate (PLP). The protein is Pyridoxine/pyridoxamine 5'-phosphate oxidase of Bartonella henselae (strain ATCC 49882 / DSM 28221 / CCUG 30454 / Houston 1) (Rochalimaea henselae).